We begin with the raw amino-acid sequence, 71 residues long: Small ribosomal subunit protein bS21 (71 aa).

The interval 43 to 71 (TERKRAKASAVKRHAKKLARENARRTRLY) is disordered. Positions 46–59 (KRAKASAVKRHAKK) are enriched in basic residues. Over residues 60 to 71 (LARENARRTRLY) the composition is skewed to basic and acidic residues.

The protein belongs to the bacterial ribosomal protein bS21 family.

The protein is Small ribosomal subunit protein bS21 of Edwardsiella ictaluri (strain 93-146).